The following is a 232-amino-acid chain: Noggin (232 aa).

Residues methionine 1–glycine 27 form the signal peptide. N-linked (GlcNAc...) asparagine glycosylation is present at asparagine 62. The tract at residues glycine 77–glycine 96 is disordered. Intrachain disulfides connect cysteine 155/cysteine 192, cysteine 178/cysteine 228, cysteine 184/cysteine 230, and cysteine 207/cysteine 215.

It belongs to the noggin family. As to quaternary structure, homodimer. Interacts with GDF5; inhibits chondrocyte differentiation.

The protein resides in the secreted. Functionally, inhibitor of bone morphogenetic proteins (BMP) signaling which is required for growth and patterning of the neural tube and somite. Essential for cartilage morphogenesis and joint formation. Inhibits chondrocyte differentiation through its interaction with GDF5 and, probably, GDF6. In Homo sapiens (Human), this protein is Noggin (NOG).